A 1520-amino-acid polypeptide reads, in one-letter code: DNA-directed RNA polymerase subunit beta'' (1520 aa).

Residues cysteine 220, cysteine 296, cysteine 303, and cysteine 306 each coordinate Zn(2+). Composition is skewed to basic and acidic residues over residues 645-654 (TREEEYRTRE) and 664-674 (PENKYRTREGE). Disordered regions lie at residues 645–676 (TREEEYRTREEDSEDEYESPENKYRTREGEGE) and 705–786 (YRTL…KKEG). Acidic residues-rich tracts occupy residues 730-748 (GEYEILEEDSEEEYGSSED) and 756-779 (TLEEDSEEDSEEDSEDEYGSPEED).

The protein belongs to the RNA polymerase beta' chain family. RpoC2 subfamily. In terms of assembly, in plastids the minimal PEP RNA polymerase catalytic core is composed of four subunits: alpha, beta, beta', and beta''. When a (nuclear-encoded) sigma factor is associated with the core the holoenzyme is formed, which can initiate transcription. The cofactor is Zn(2+).

The protein localises to the plastid. The protein resides in the chloroplast. The enzyme catalyses RNA(n) + a ribonucleoside 5'-triphosphate = RNA(n+1) + diphosphate. In terms of biological role, DNA-dependent RNA polymerase catalyzes the transcription of DNA into RNA using the four ribonucleoside triphosphates as substrates. The protein is DNA-directed RNA polymerase subunit beta'' of Sorghum bicolor (Sorghum).